We begin with the raw amino-acid sequence, 1651 residues long: Alsin (1651 aa).

RCC1 repeat units lie at residues 59–108 (DGEV…AVTE), 109–167 (SGVV…ALSL), and 169–218 (REIW…ALVQ). A disordered region spans residues 425-462 (ETAAQSGSASTGPESLKDLREEQVKQESLQGKKSSSLM). The segment covering 427–437 (AAQSGSASTGP) has biased composition (polar residues). The span at 439 to 449 (SLKDLREEQVK) shows a compositional bias: basic and acidic residues. Residues 450–461 (QESLQGKKSSSL) show a composition bias toward polar residues. Residues Ser-459, Ser-460, Ser-477, and Ser-486 each carry the phosphoserine modification. Thr-504 carries the phosphothreonine modification. RCC1 repeat units follow at residues 519-570 (RTEV…ALTA) and 572-621 (SQVY…FLVD). Lys-527 bears the N6-acetyllysine mark. The DH domain maps to 684 to 879 (GYIASLHELA…ESLALHLGKK (196 aa)). The PH domain maps to 895–1001 (GKMTDSLRKP…RAISQAVDQA (107 aa)). MORN repeat units follow at residues 1043–1065 (YDGR…DGKM), 1066–1088 (YSGM…NKAL), 1094–1116 (YVGH…SGEV), 1117–1139 (FEGC…KLTS), 1145–1167 (FIGQ…TRGE), 1169–1191 (YMGM…FGLY), 1192–1214 (YEGN…DDTI), and 1215–1238 (YEGE…HGDY). A Phosphoserine modification is found at Ser-1329. A VPS9 domain is found at 1507–1651 (KQPDIALLGF…YFQIQREKLN (145 aa)).

Forms a heteromeric complex with ALS2CL. Interacts with ALS2CL.

In terms of biological role, may act as a GTPase regulator. Controls survival and growth of spinal motoneurons. The protein is Alsin (Als2) of Mus musculus (Mouse).